The primary structure comprises 515 residues: MTTAQFAVNLNMEGLKGDLLVFCVNQAKERGKIVCHNLVDAQVRAAFDLGDFSGKEGETLLLYPFHSTELSVAGAARILVLGVGDSSDQKEPGGVRDLFRRAGGCIAGQCELLKVETLMVALPETPFLDPGQTAECLVEGICLGDYRFVRYKQPESKEREYLGLKQVFLVSGKTDPAVEKGMDLGRRAALAACEARNMANEPANIWTASAFAAFAQTLAKAHSLGCRILEKSDMERLGMGGILAVNQGSGEPPKLVVLEYLPENRSETLLLVGKGVTFDSGGISLKPAPGMEKMKYDMCGGAAVLCAMQAVAEERPHVGVVAIVPATDNLSGGLAVKPGDVIRHFNGKTAEIVNTDAEGRMILADALAWGINEYNPCCVVDLATLTGAVVMGLGHHYSGIMGNNDALARCLEDAGEKAGEPLWRLPLGKAYAKQIESKVADIKNIGGKSAGAITAAAYLENFVGDTPWVHMDIAGTAWDFTEKTYIPKDGPSGIGVRTLVSLIRNWQPGTIVSSR.

Mn(2+)-binding residues include Lys-274 and Asp-279. Lys-286 is a catalytic residue. Mn(2+)-binding residues include Asp-297, Asp-356, and Glu-358. Arg-360 is a catalytic residue.

The protein belongs to the peptidase M17 family. Mn(2+) is required as a cofactor.

The protein resides in the cytoplasm. It catalyses the reaction Release of an N-terminal amino acid, Xaa-|-Yaa-, in which Xaa is preferably Leu, but may be other amino acids including Pro although not Arg or Lys, and Yaa may be Pro. Amino acid amides and methyl esters are also readily hydrolyzed, but rates on arylamides are exceedingly low.. It carries out the reaction Release of an N-terminal amino acid, preferentially leucine, but not glutamic or aspartic acids.. Presumably involved in the processing and regular turnover of intracellular proteins. Catalyzes the removal of unsubstituted N-terminal amino acids from various peptides. This Desulforapulum autotrophicum (strain ATCC 43914 / DSM 3382 / VKM B-1955 / HRM2) (Desulfobacterium autotrophicum) protein is Probable cytosol aminopeptidase.